A 115-amino-acid polypeptide reads, in one-letter code: Peptidyl-tRNA hydrolase (115 aa).

The protein belongs to the PTH2 family.

Its subcellular location is the cytoplasm. It carries out the reaction an N-acyl-L-alpha-aminoacyl-tRNA + H2O = an N-acyl-L-amino acid + a tRNA + H(+). Functionally, the natural substrate for this enzyme may be peptidyl-tRNAs which drop off the ribosome during protein synthesis. The sequence is that of Peptidyl-tRNA hydrolase from Methanocaldococcus jannaschii (strain ATCC 43067 / DSM 2661 / JAL-1 / JCM 10045 / NBRC 100440) (Methanococcus jannaschii).